Consider the following 291-residue polypeptide: Arabinogalactan O-methyltransferase 2 (291 aa).

A helical membrane pass occupies residues 18-38 (WFLAVALAGLIGGAMLITSFI).

Belongs to the methyltransferase superfamily.

It is found in the golgi apparatus membrane. Functionally, involved in the methylation of glucuronic acid of different plant cell wall component, but mainly on side chains of arabinogalactans. This Arabidopsis thaliana (Mouse-ear cress) protein is Arabinogalactan O-methyltransferase 2.